The sequence spans 671 residues: DNA ligase (671 aa).

NAD(+)-binding positions include 32–36 (DAEYD), 81–82 (SL), and Glu113. Residue Lys115 is the N6-AMP-lysine intermediate of the active site. Arg136, Glu173, Lys290, and Lys314 together coordinate NAD(+). Zn(2+)-binding residues include Cys408, Cys411, Cys426, and Cys432. A BRCT domain is found at 593 to 671 (EIDSPFAGKT…EAEMIRLLGA (79 aa)).

Belongs to the NAD-dependent DNA ligase family. LigA subfamily. Requires Mg(2+) as cofactor. Mn(2+) serves as cofactor.

It catalyses the reaction NAD(+) + (deoxyribonucleotide)n-3'-hydroxyl + 5'-phospho-(deoxyribonucleotide)m = (deoxyribonucleotide)n+m + AMP + beta-nicotinamide D-nucleotide.. In terms of biological role, DNA ligase that catalyzes the formation of phosphodiester linkages between 5'-phosphoryl and 3'-hydroxyl groups in double-stranded DNA using NAD as a coenzyme and as the energy source for the reaction. It is essential for DNA replication and repair of damaged DNA. The chain is DNA ligase from Salmonella typhimurium (strain LT2 / SGSC1412 / ATCC 700720).